Reading from the N-terminus, the 238-residue chain is Polynucleotide 3'-phosphatase (238 aa).

Belongs to the DNA 3' phosphatase family.

It is found in the nucleus. The enzyme catalyses a 3'end (2'-deoxyribonucleotide 3'-phosphate)-DNA + H2O = a 3'-end 2'-deoxyribonucleotide-DNA + phosphate. Functionally, dephosphorylate DNA's 3'-phosphate termini. Has a role in the repair of breaks in single-stranded DNA. The sequence is that of Polynucleotide 3'-phosphatase (TPP1) from Saccharomyces cerevisiae (strain ATCC 204508 / S288c) (Baker's yeast).